Here is a 197-residue protein sequence, read N- to C-terminus: Xanthine phosphoribosyltransferase (197 aa).

The xanthine site is built by Leu20 and Asn27. 5-phospho-alpha-D-ribose 1-diphosphate is bound at residue Ala128–Ala132. Lys156 provides a ligand contact to xanthine.

Belongs to the purine/pyrimidine phosphoribosyltransferase family. Xpt subfamily. As to quaternary structure, homodimer.

Its subcellular location is the cytoplasm. The enzyme catalyses XMP + diphosphate = xanthine + 5-phospho-alpha-D-ribose 1-diphosphate. It functions in the pathway purine metabolism; XMP biosynthesis via salvage pathway; XMP from xanthine: step 1/1. Converts the preformed base xanthine, a product of nucleic acid breakdown, to xanthosine 5'-monophosphate (XMP), so it can be reused for RNA or DNA synthesis. The sequence is that of Xanthine phosphoribosyltransferase from Bacillus cereus (strain B4264).